The sequence spans 402 residues: 1-deoxy-D-xylulose 5-phosphate reductoisomerase (402 aa).

NADPH is bound by residues Thr-21, Gly-22, Ser-23, Ile-24, Gly-47, Asn-50, and Asn-127. Lys-128 contributes to the 1-deoxy-D-xylulose 5-phosphate binding site. Glu-129 is an NADPH binding site. Asp-151 contacts Mn(2+). 1-deoxy-D-xylulose 5-phosphate contacts are provided by Ser-152, Glu-153, Ser-177, and His-200. Glu-153 is a binding site for Mn(2+). Gly-206 serves as a coordination point for NADPH. Residues Ser-213, Asn-218, Lys-219, and Glu-222 each contribute to the 1-deoxy-D-xylulose 5-phosphate site. Glu-222 contacts Mn(2+).

It belongs to the DXR family. Mg(2+) is required as a cofactor. The cofactor is Mn(2+).

The enzyme catalyses 2-C-methyl-D-erythritol 4-phosphate + NADP(+) = 1-deoxy-D-xylulose 5-phosphate + NADPH + H(+). It functions in the pathway isoprenoid biosynthesis; isopentenyl diphosphate biosynthesis via DXP pathway; isopentenyl diphosphate from 1-deoxy-D-xylulose 5-phosphate: step 1/6. Functionally, catalyzes the NADPH-dependent rearrangement and reduction of 1-deoxy-D-xylulose-5-phosphate (DXP) to 2-C-methyl-D-erythritol 4-phosphate (MEP). The polypeptide is 1-deoxy-D-xylulose 5-phosphate reductoisomerase (Mycobacterium ulcerans (strain Agy99)).